A 240-amino-acid chain; its full sequence is Nuclear receptor-interacting protein 3 (240 aa).

In Mus musculus (Mouse), this protein is Nuclear receptor-interacting protein 3 (Nrip3).